Reading from the N-terminus, the 158-residue chain is Mitotic-spindle organizing protein 2A (158 aa).

Ser-34 carries the post-translational modification Phosphoserine. The disordered stretch occupies residues 84-158 (RLASEPQDPA…PGKSPTQGST (75 aa)). Low complexity predominate over residues 112-122 (SAALGGVLALA). Residues 128-140 (EGSSQRMPRQPSA) are compositionally biased toward polar residues. Residue Ser-152 is modified to Phosphoserine.

The protein belongs to the MOZART2 family. As to quaternary structure, associates with the gamma-tubulin ring complex (gTuRC) consisting of TUBGCP2, TUBGCP3, TUBGCP4, TUBGCP5 and TUBGCP6 and gamma-tubulin TUBG1 or TUBG2; within the complex, interacts with TUBGCP2; the interaction plays a role in gTuRC activation.

The protein localises to the cytoplasm. The protein resides in the cytoskeleton. Its subcellular location is the microtubule organizing center. It localises to the centrosome. It is found in the spindle. Its function is as follows. Required for the recruitment and the assembly of the gamma-tubulin ring complex (gTuRC) at the centrosome. The gTuRC regulates the minus-end nucleation of alpha-beta tubulin heterodimers that grow into microtubule protafilaments, a critical step in centrosome duplication and spindle formation. The protein is Mitotic-spindle organizing protein 2A (MZT2A) of Homo sapiens (Human).